The following is a 403-amino-acid chain: Leu/Ile/Val-binding protein homolog 8 (403 aa).

The first 26 residues, 1–26 (MRLSRLLIGASLGVALSSTVFTAALA), serve as a signal peptide directing secretion.

The protein belongs to the leucine-binding protein family.

In terms of biological role, component of an amino-acid transport system. The sequence is that of Leu/Ile/Val-binding protein homolog 8 from Brucella abortus (strain 2308).